Reading from the N-terminus, the 642-residue chain is MDEANIQDKERFASRENHCEIERRRRNKMTAYITELSDMVPTCSALARKPDKLTILRMAVAHMKALRGTGNTSSDGTYKPSFLTDQELKHLILEAADGFLFVVSCDSGRVIYVSDSVTPVLNYTQSDWYGTSLYEHIHPDDREKIREQLSTQESQNAGRILDLKSGTVKKEGHQSSMRLSMGARRGFICRMRVGNVNPESMVSGHLNRLKQRNSLGPSRDGTNYAVVHCTGYIKNWPPTDMFPNMHMERDVDDMSSHCCLVAIGRLQVTSTAANDMSGSNNQSEFITRHAMDGKFTFVDQRVLNILGYTPTELLGKICYDFFHPEDQSHMKESFDQVLKQKGQMFSLLYRARAKNSEYVWLRTQAYAFLNPYTDEVEYIVCTNSSGKTMHGAPLDAAAAHTPEQVQQQQQQEQHVYVQAAPGVDYARRELTPVGSATNDGMYQTHMLAMQAPTPQQQQQQQQRPGSAQTTPVGYTYDTTHSPYSAGGPSPLAKIPKSGTSPTPVAPNSWAALRPQQQQQQQQPVTEGYQYQQTSPARSPSGPTYTQLSAGNGNRQQAQPGAYQAGPPPPPNAPGMWDWQQAGGHPHPPHPTAHPHHPHAHPGGPAGAGQPQGQEFSDMLQMLDHTPTTFEDLNINMFSTPFE.

Residues 13 to 66 (ASRENHCEIERRRRNKMTAYITELSDMVPTCSALARKPDKLTILRMAVAHMKAL) form the bHLH domain. 2 PAS domains span residues 85 to 156 (DQEL…ESQN) and 271 to 341 (TAAN…LKQK). Residues 346-389 (SLLYRARAKNSEYVWLRTQAYAFLNPYTDEVEYIVCTNSSGKTM) enclose the PAC domain. Residues 450-612 (QAPTPQQQQQ…GPAGAGQPQG (163 aa)) are disordered. 2 stretches are compositionally biased toward polar residues: residues 463–482 (RPGSAQTTPVGYTYDTTHSP) and 528–554 (YQYQQTSPARSPSGPTYTQLSAGNGNR). The span at 555-564 (QQAQPGAYQA) shows a compositional bias: low complexity.

In terms of assembly, efficient DNA binding requires dimerization with another bHLH protein. Heterodimer with ahr, trh or sim. At stage 11, expression is detected in tracheal pits. At later stages, strong expression is also detected in the CNS.

The protein resides in the nucleus. Functionally, heterodimers of tgo/trh are involved in the control of breathless expression. Plays a role in the cellular or tissue response to oxygen deprivation. In Drosophila melanogaster (Fruit fly), this protein is Aryl hydrocarbon receptor nuclear translocator homolog (tgo).